The following is a 459-amino-acid chain: Alpha-N-acetylgalactosaminidase (459 aa).

A signal peptide (tat-type signal) is located at residues Met-1–Ala-31. NAD(+) is bound by residues Glu-64 to Arg-65, Asp-86, Trp-135 to His-138, Glu-155 to Val-156, and Asn-184. Residues Tyr-213, Arg-232, Tyr-244–His-247, and Tyr-326 each bind substrate. Position 244 (Tyr-244) interacts with NAD(+).

The protein belongs to the Gfo/Idh/MocA family. Glycosyl hydrolase 109 subfamily. NAD(+) serves as cofactor. Predicted to be exported by the Tat system. The position of the signal peptide cleavage has not been experimentally proven.

It catalyses the reaction Cleavage of non-reducing alpha-(1-&gt;3)-N-acetylgalactosamine residues from human blood group A and AB mucin glycoproteins, Forssman hapten and blood group A lacto series glycolipids.. In terms of biological role, glycosidase that has specific alpha-N-acetylgalactosaminidase activity. This is Alpha-N-acetylgalactosaminidase (nagA) from Shewanella oneidensis (strain ATCC 700550 / JCM 31522 / CIP 106686 / LMG 19005 / NCIMB 14063 / MR-1).